A 575-amino-acid chain; its full sequence is Transcription factor COE2 (575 aa).

Residues 62-65 are interaction with DNA; it reads RKSN. The segment at 150–169 adopts a C5-type zinc-finger fold; the sequence is CRVLLTHEVMCSRCCEKKSC. Interaction with DNA regions lie at residues 196-203 and 235-238; these read NCLKTAGN and NNSK. Residues 253-336 enclose the IPT/TIG domain; that stretch reads PCIKAISPSE…KGAPGRFIYT (84 aa). The span at 441–453 shows a compositional bias: polar residues; that stretch reads STQGNNQGYIRNT. The segment at 441–479 is disordered; that stretch reads STQGNNQGYIRNTSSISPRGYSSSSTPQQSNYSTSSNSM. The span at 454–479 shows a compositional bias: low complexity; that stretch reads SSISPRGYSSSSTPQQSNYSTSSNSM.

This sequence belongs to the COE family. Forms either a homodimer or a heterodimer with a related family member. Interacts with SIX1. In terms of tissue distribution, in adult expressed in olfactory epithelium and at a much lower level in Purkinje cells of the cerebellum. In embryo expressed in epithalamus, in cells near the ventricular zone of mesencephalon and on the ventral surface of rhombencephalon, in the developing vomeronasal organ, at a lower level in developing spinal cord. Not expressed in developing retina, inner ear, dorsal root ganglia, trigeminal ganglia and glossopharyngeal ganglia.

It is found in the nucleus. Its function is as follows. Transcription factor that, in osteoblasts, activates the decoy receptor for RANKL, TNFRSF11B, which in turn regulates osteoclast differentiation. Acts in synergy with the Wnt-responsive LEF1/CTNNB1 pathway. Recognizes variations of the palindromic sequence 5'-ATTCCCNNGGGAATT-3'. In Mus musculus (Mouse), this protein is Transcription factor COE2 (Ebf2).